Reading from the N-terminus, the 196-residue chain is Small ribosomal subunit protein uS4c (196 aa).

Positions 17 to 36 are disordered; it reads ALPGLTRKTPKSGSNLKKKF. In terms of domain architecture, S4 RNA-binding spans 89–150; the sequence is MRLDNIVFRL…NQRSKRLVQN (62 aa).

The protein belongs to the universal ribosomal protein uS4 family. As to quaternary structure, part of the 30S ribosomal subunit. Contacts protein S5. The interaction surface between S4 and S5 is involved in control of translational fidelity.

It localises to the plastid. The protein localises to the chloroplast. Functionally, one of the primary rRNA binding proteins, it binds directly to 16S rRNA where it nucleates assembly of the body of the 30S subunit. In terms of biological role, with S5 and S12 plays an important role in translational accuracy. The chain is Small ribosomal subunit protein uS4c (rps4) from Tragus racemosus (Carrot grass).